A 529-amino-acid chain; its full sequence is Bifunctional purine biosynthesis protein PurH (529 aa).

Positions 1–148 (MNNVRPIRRA…KNHKDTTIVV (148 aa)) constitute an MGS-like domain.

The protein belongs to the PurH family.

The catalysed reaction is (6R)-10-formyltetrahydrofolate + 5-amino-1-(5-phospho-beta-D-ribosyl)imidazole-4-carboxamide = 5-formamido-1-(5-phospho-D-ribosyl)imidazole-4-carboxamide + (6S)-5,6,7,8-tetrahydrofolate. It carries out the reaction IMP + H2O = 5-formamido-1-(5-phospho-D-ribosyl)imidazole-4-carboxamide. Its pathway is purine metabolism; IMP biosynthesis via de novo pathway; 5-formamido-1-(5-phospho-D-ribosyl)imidazole-4-carboxamide from 5-amino-1-(5-phospho-D-ribosyl)imidazole-4-carboxamide (10-formyl THF route): step 1/1. It functions in the pathway purine metabolism; IMP biosynthesis via de novo pathway; IMP from 5-formamido-1-(5-phospho-D-ribosyl)imidazole-4-carboxamide: step 1/1. The sequence is that of Bifunctional purine biosynthesis protein PurH from Shewanella frigidimarina (strain NCIMB 400).